A 448-amino-acid polypeptide reads, in one-letter code: Methylenetetrahydrofolate--tRNA-(uracil-5-)-methyltransferase TrmFO (448 aa).

An FAD-binding site is contributed by Gly-13–Gly-18.

This sequence belongs to the MnmG family. TrmFO subfamily. It depends on FAD as a cofactor.

The protein localises to the cytoplasm. It carries out the reaction uridine(54) in tRNA + (6R)-5,10-methylene-5,6,7,8-tetrahydrofolate + NADH + H(+) = 5-methyluridine(54) in tRNA + (6S)-5,6,7,8-tetrahydrofolate + NAD(+). The enzyme catalyses uridine(54) in tRNA + (6R)-5,10-methylene-5,6,7,8-tetrahydrofolate + NADPH + H(+) = 5-methyluridine(54) in tRNA + (6S)-5,6,7,8-tetrahydrofolate + NADP(+). Its function is as follows. Catalyzes the folate-dependent formation of 5-methyl-uridine at position 54 (M-5-U54) in all tRNAs. The sequence is that of Methylenetetrahydrofolate--tRNA-(uracil-5-)-methyltransferase TrmFO from Streptococcus pyogenes serotype M4 (strain MGAS10750).